Consider the following 166-residue polypeptide: NAD(P)H-quinone oxidoreductase subunit I, chloroplastic (166 aa).

4Fe-4S ferredoxin-type domains follow at residues 55–84 (GRIH…VDWK) and 95–124 (LNYS…MTEE). 8 residues coordinate [4Fe-4S] cluster: cysteine 64, cysteine 67, cysteine 70, cysteine 74, cysteine 104, cysteine 107, cysteine 110, and cysteine 114.

It belongs to the complex I 23 kDa subunit family. NDH is composed of at least 16 different subunits, 5 of which are encoded in the nucleus. [4Fe-4S] cluster is required as a cofactor.

Its subcellular location is the plastid. The protein resides in the chloroplast thylakoid membrane. The enzyme catalyses a plastoquinone + NADH + (n+1) H(+)(in) = a plastoquinol + NAD(+) + n H(+)(out). It carries out the reaction a plastoquinone + NADPH + (n+1) H(+)(in) = a plastoquinol + NADP(+) + n H(+)(out). NDH shuttles electrons from NAD(P)H:plastoquinone, via FMN and iron-sulfur (Fe-S) centers, to quinones in the photosynthetic chain and possibly in a chloroplast respiratory chain. The immediate electron acceptor for the enzyme in this species is believed to be plastoquinone. Couples the redox reaction to proton translocation, and thus conserves the redox energy in a proton gradient. The sequence is that of NAD(P)H-quinone oxidoreductase subunit I, chloroplastic from Pentanema britannica (British yellowhead).